A 209-amino-acid polypeptide reads, in one-letter code: Transcription factor 23 (209 aa).

2 disordered regions span residues Met-1–Lys-20 and Leu-54–Arg-85. Residues Gly-72–Arg-85 show a composition bias toward basic and acidic residues. The bHLH domain occupies Glu-75–Leu-127.

As to quaternary structure, forms inactive heterodimeric complex with TCF3. As to expression, highly expressed in the uterus (predominantly in myometrium), ovary, and testis. Expression in the uterus is higher in the diestrus phase than in the estrus phase and reaches a maximum at 7.5 dpc. Expression declines towards the time of delivery and returns to the non-pregnant level 4 days after delivery. Low expression seen in lung, heart, intestine, and spleen.

The protein resides in the nucleus. In terms of biological role, inhibits E-box-mediated binding and transactivation of bHLH factors. Inhibitory effect is similar to that of ID proteins. Inhibits the formation of TCF3 and MYOD1 homodimers and heterodimers. Lacks DNA binding activity. May be involved in the regulation or modulation of smooth muscle contraction of the uterus during pregnancy and particularly around the time of delivery. Seems to play a role in the inhibition of myogenesis. In Mus musculus (Mouse), this protein is Transcription factor 23 (Tcf23).